The following is a 92-amino-acid chain: Protein EMB-1 (92 aa).

Composition is skewed to basic and acidic residues over residues 1-16 (MASQ…RARQ), 37-61 (AEGR…EMGR), and 72-92 (GGER…RTKK). The disordered stretch occupies residues 1–92 (MASQQEKKEL…IDESKFRTKK (92 aa)).

The protein belongs to the small hydrophilic plant seed protein family. In terms of tissue distribution, expressed in embryogenic cells, somatic embryos and seeds at the later stages of development. In the embryos, expressed in the procambium, the root and shoot meristem and the protoderm of the cotyledons. Not detected in the endosperm or the aleurone layer, in young leaves or roots.

Its subcellular location is the nucleus. This Daucus carota (Wild carrot) protein is Protein EMB-1.